We begin with the raw amino-acid sequence, 87 residues long: Large ribosomal subunit protein bL27 (87 aa).

The interval 1–21 (MAHKKGGGSTRNGRDSASKRL) is disordered.

This sequence belongs to the bacterial ribosomal protein bL27 family.

This chain is Large ribosomal subunit protein bL27, found in Amoebophilus asiaticus (strain 5a2).